The sequence spans 1150 residues: GPI inositol-deacylase (1150 aa).

Residues 1 to 43 (MQGRPNGASGDPNPRNDTSVTIDSDSDNGSRHRIAEVRGSSPS) are disordered. Residues Asn-16 and Asn-28 are each glycosylated (N-linked (GlcNAc...) asparagine). A helical transmembrane segment spans residues 122-142 (ICSGLVLFVTVSALLILSIIV). Residue Ser-309 is part of the active site. The helical transmembrane segment at 790–810 (LAMRYRTVFAAFPLLVVSLVL) threads the bilayer. An N-linked (GlcNAc...) asparagine glycan is attached at Asn-818. Residues 829–849 (ALDLCIRSSIPLLFLGLTFLA) traverse the membrane as a helical segment. Asn-870 is a glycosylation site (N-linked (GlcNAc...) asparagine). Residues 890-910 (AFFWFLVPLFGIISIGTCVIV) form a helical membrane-spanning segment. Residue Asn-942 is glycosylated (N-linked (GlcNAc...) asparagine). 5 helical membrane passes run 960 to 980 (VLLL…VACV), 1010 to 1030 (SIFI…IVWI), 1047 to 1067 (VFSI…TMIP), 1079 to 1099 (VLFF…AYLL), and 1102 to 1122 (ITNL…GFSL). Asn-1124 and Asn-1130 each carry an N-linked (GlcNAc...) asparagine glycan.

This sequence belongs to the GPI inositol-deacylase family.

It localises to the endoplasmic reticulum membrane. Involved in inositol deacylation of GPI-anchored proteins which plays important roles in the quality control and ER-associated degradation of GPI-anchored proteins. The protein is GPI inositol-deacylase (BST1) of Coccidioides immitis (strain RS) (Valley fever fungus).